The sequence spans 478 residues: MLLLELKKTNQTLETIHFIGIGGVGMSGIAEILHNLGYKVQGSDLSENYNTKRLEAYGIKIFVGHTPQNITNVSYVVVSSAINRNNPEVKEALERKIPIIRRAEMLAELMRLKCSVAVSGSHGKTTTTSLVACLFEAAGLHPTVINGGIINNRSTNAYLGSSNYLIAEADESDATFISIPSTIAIITNIDPEHLDYYKDFDTLINAFRSFITNLPFYGFAVCCIDHKIVRELVNNITERKVITYGIDSDDAHITAFNISTDITSSTFDVKISLPNVSGVTIIEKITIPTPGRHNILNSLAAISVGVELDFGIKAIKNGFNSFKGVKRRFTKVAEYNQASVIDDYAHHPEEIKATLSTAKNIANKQHGKVIAIFQPHRYSRMQHLFDDFMRCFDDADLLYITDVYAAGESHIEGISGQSLIDNIIKLKYHNQANFLAKLDDSLEVIMNKASPGDMIIMMGAGNISNFANELPQKFGNLS.

120–126 (GSHGKTT) is a binding site for ATP.

It belongs to the MurCDEF family.

The protein resides in the cytoplasm. It catalyses the reaction UDP-N-acetyl-alpha-D-muramate + L-alanine + ATP = UDP-N-acetyl-alpha-D-muramoyl-L-alanine + ADP + phosphate + H(+). The protein operates within cell wall biogenesis; peptidoglycan biosynthesis. Cell wall formation. The sequence is that of UDP-N-acetylmuramate--L-alanine ligase from Rickettsia bellii (strain OSU 85-389).